We begin with the raw amino-acid sequence, 207 residues long: Small ribosomal subunit protein uS10m (207 aa).

The transit peptide at 1-24 (MLSVFGLRTVARCNSTLASGGARA) directs the protein to the mitochondrion.

Belongs to the universal ribosomal protein uS10 family. As to quaternary structure, part of the mitochondrial small ribosomal subunit.

The protein resides in the mitochondrion. Its function is as follows. Involved in mitochondrial genome encoded proteins translation. Involved in the binding of tRNA to the ribosomes. In Eremothecium gossypii (strain ATCC 10895 / CBS 109.51 / FGSC 9923 / NRRL Y-1056) (Yeast), this protein is Small ribosomal subunit protein uS10m (RSM10).